A 75-amino-acid chain; its full sequence is Sperm-specific protein PL-I (75 aa).

One can recognise an H15 domain in the interval 2–74 (GSSGMMSMVA…GSAGWVLVPK (73 aa)).

The protein belongs to the histone H1/H5 family. In terms of tissue distribution, sperm.

It is found in the nucleus. The protein resides in the chromosome. In terms of biological role, linker histones are implicated in chromatin remodeling and/or transcriptional regulation during spermiogenesis, the process of spermatid maturation into spermatozoa. In Spisula solidissima (Atlantic surf-clam), this protein is Sperm-specific protein PL-I.